A 247-amino-acid polypeptide reads, in one-letter code: MSTNPKPAFRRILLKLSGEALMGEEGFGIDPKVLDRMAQEIKELVELGIQVGVVIGGGNLFRGEGLAQAGMNRVVGDHMGMLATVMNGLAMRDALHRAYVNARLMSAIPLKGVCDDYNWAEAISLLKSGRVVIFAAGTGNPFCTTDSAACLRGIEIEAEVVLKGTKVDGVYSDDPVKNPEAVKYDEMGYGEVLEKELKVMDLAAFTLARDHDMPILVFNMNKPGALRRVIMGDHEGTLIRSSRKTAE.

15–18 (KLSG) contacts ATP. The involved in allosteric activation by GTP stretch occupies residues 23–28 (GEEGFG). G57 is a binding site for UMP. ATP-binding residues include G58 and R62. Residues D77 and 138-145 (TGNPFCTT) each bind UMP. T165, Y171, and D174 together coordinate ATP.

The protein belongs to the UMP kinase family. Homohexamer.

Its subcellular location is the cytoplasm. It catalyses the reaction UMP + ATP = UDP + ADP. It participates in pyrimidine metabolism; CTP biosynthesis via de novo pathway; UDP from UMP (UMPK route): step 1/1. Allosterically activated by GTP. Inhibited by UTP. Functionally, catalyzes the reversible phosphorylation of UMP to UDP. This chain is Uridylate kinase, found in Shewanella loihica (strain ATCC BAA-1088 / PV-4).